We begin with the raw amino-acid sequence, 460 residues long: Orexin receptor type 2 (460 aa).

Residues Met-1 to Glu-54 lie on the Extracellular side of the membrane. N-linked (GlcNAc...) asparagine glycans are attached at residues Asn-14 and Asn-22. Residues Asp-33–His-49 are required for response to orexin-A. A helical transmembrane segment spans residues Trp-55–Val-75. Over Cys-76–Val-88 the chain is Cytoplasmic. A helical membrane pass occupies residues Thr-89 to Ala-110. Residues Thr-111–Cys-127 lie on the Extracellular side of the membrane. Cys-127 and Cys-210 form a disulfide bridge. Residues Lys-128–Leu-150 form a helical membrane-spanning segment. The Cytoplasmic portion of the chain corresponds to Asp-151–Arg-170. A helical transmembrane segment spans residues Asn-171 to Met-191. At Glu-192–Met-222 the chain is on the extracellular side. N-linked (GlcNAc...) asparagine glycosylation is present at Asn-202. Residues Tyr-223–Tyr-243 form a helical membrane-spanning segment. Residues Leu-244–Arg-304 lie on the Cytoplasmic side of the membrane. A helical transmembrane segment spans residues Met-305 to Leu-326. Residues Lys-327–Val-342 are Extracellular-facing. The helical transmembrane segment at Tyr-343–Phe-366 threads the bilayer. Over Leu-367–Val-460 the chain is Cytoplasmic.

The protein belongs to the G-protein coupled receptor 1 family. Expressed in the brain in the cerebral cortex, septal nuclei, hippocampus, medial thalamic groups, dorsal and median raphe nuclei, and many hypothalamic nuclei including the tuberomammillary nucleus, dorsomedial hypothalamus, paraventricular hypothalamic nucleus, and ventral premammillary nucleus. Not detected in the spleen, lung, liver, skeletal muscle, kidney and testis. Orexin receptor mRNA expression has also been reported in the adrenal gland, enteric nervous system, and pancreas.

It is found in the cell membrane. Its function is as follows. Nonselective, high-affinity receptor for both orexin-A and orexin-B neuropeptides. Triggers an increase in cytoplasmic Ca(2+) levels in response to orexin-A binding. The chain is Orexin receptor type 2 (Hcrtr2) from Rattus norvegicus (Rat).